Consider the following 424-residue polypeptide: CinA-like protein (424 aa).

This sequence belongs to the CinA family.

In Shewanella amazonensis (strain ATCC BAA-1098 / SB2B), this protein is CinA-like protein.